The sequence spans 479 residues: Putative F-box/LRR-repeat protein At1g56400 (479 aa).

Residues 12 to 60 (QDRLSNLPDVLLIMIISCLSFKECIRTSVLAKRWRYLCRETRNISFKET) form the F-box domain. LRR repeat units lie at residues 99–129 (YFSI…VLDF), 139–167 (CASR…KIYS), 186–211 (IGWI…SINY), 228–254 (VFES…KYSG), 287–312 (RTKL…SVCP), 342–367 (LHVM…TFDI), and 419–446 (LKFL…ELYM).

This Arabidopsis thaliana (Mouse-ear cress) protein is Putative F-box/LRR-repeat protein At1g56400.